The sequence spans 860 residues: DNA mismatch repair protein MutS (860 aa).

607–614 lines the ATP pocket; sequence GPNMSGKS.

This sequence belongs to the DNA mismatch repair MutS family.

In terms of biological role, this protein is involved in the repair of mismatches in DNA. It is possible that it carries out the mismatch recognition step. This protein has a weak ATPase activity. The chain is DNA mismatch repair protein MutS from Listeria monocytogenes serotype 4a (strain HCC23).